The primary structure comprises 1072 residues: DNA-directed RNA polymerase subunit beta (1072 aa).

Belongs to the RNA polymerase beta chain family. In plastids the minimal PEP RNA polymerase catalytic core is composed of four subunits: alpha, beta, beta', and beta''. When a (nuclear-encoded) sigma factor is associated with the core the holoenzyme is formed, which can initiate transcription.

The protein localises to the plastid. The protein resides in the chloroplast. The enzyme catalyses RNA(n) + a ribonucleoside 5'-triphosphate = RNA(n+1) + diphosphate. In terms of biological role, DNA-dependent RNA polymerase catalyzes the transcription of DNA into RNA using the four ribonucleoside triphosphates as substrates. This Olimarabidopsis pumila (Dwarf rocket) protein is DNA-directed RNA polymerase subunit beta.